Reading from the N-terminus, the 160-residue chain is Globin-like protein (160 aa).

One can recognise a Globin domain in the interval Ser-2–Lys-152. Residue His-101 participates in heme binding.

Belongs to the globin family.

It localises to the cytoplasm. May be a globin and may play a role in oxygen transport. The polypeptide is Globin-like protein (glb-1) (Caenorhabditis briggsae).